The primary structure comprises 511 residues: Putative thymidine phosphorylase (511 aa).

The protein belongs to the thymidine/pyrimidine-nucleoside phosphorylase family. Type 2 subfamily.

The enzyme catalyses thymidine + phosphate = 2-deoxy-alpha-D-ribose 1-phosphate + thymine. The chain is Putative thymidine phosphorylase from Polaromonas sp. (strain JS666 / ATCC BAA-500).